The sequence spans 109 residues: Large ribosomal subunit protein uL23 (109 aa).

Belongs to the universal ribosomal protein uL23 family. In terms of assembly, part of the 50S ribosomal subunit. Contacts protein L29, and trigger factor when it is bound to the ribosome.

Functionally, one of the early assembly proteins it binds 23S rRNA. One of the proteins that surrounds the polypeptide exit tunnel on the outside of the ribosome. Forms the main docking site for trigger factor binding to the ribosome. This chain is Large ribosomal subunit protein uL23, found in Chlorobium phaeobacteroides (strain BS1).